The primary structure comprises 449 residues: TNF receptor-associated factor family protein DDB_G0272340 (449 aa).

The segment at 33-76 adopts an RING-type; degenerate zinc-finger fold; sequence CPICEECIMDVNKCEALQCKEGHVHCRLCWMKSLESKKECMTCR. TRAF-type zinc fingers lie at residues 133 to 187 and 189 to 251; these read GHIK…IDDS and VHYS…SELS. Positions 263-309 form a coiled coil; the sequence is MEATIDQHICKFEKSEKEYKKLELEYNRLKDDFKILQSELKVIRELK. Residues 311–437 enclose the MATH domain; that stretch reads NYQNKWVITN…QNSVTLNINI (127 aa).

The protein belongs to the TNF receptor-associated factor family. A subfamily.

It localises to the cytoplasm. Its function is as follows. Probable adapter protein and signal transducer that links members of the tumor necrosis factor receptor family to different signaling pathways by association with the receptor cytoplasmic domain and kinases. The polypeptide is TNF receptor-associated factor family protein DDB_G0272340 (Dictyostelium discoideum (Social amoeba)).